A 331-amino-acid polypeptide reads, in one-letter code: Glyceraldehyde-3-phosphate dehydrogenase (331 aa).

NAD(+) contacts are provided by residues 10-11 (RI), Asp31, Lys75, and Thr117. Residues 148 to 150 (SCT) and Thr179 each bind D-glyceraldehyde 3-phosphate. Cys149 acts as the Nucleophile in catalysis. An NAD(+)-binding site is contributed by Asn180. D-glyceraldehyde 3-phosphate contacts are provided by residues Arg194, 207–208 (TG), and Arg230. NAD(+) is bound at residue Asn311.

This sequence belongs to the glyceraldehyde-3-phosphate dehydrogenase family. As to quaternary structure, homotetramer.

The protein localises to the cytoplasm. The enzyme catalyses D-glyceraldehyde 3-phosphate + phosphate + NAD(+) = (2R)-3-phospho-glyceroyl phosphate + NADH + H(+). The protein operates within carbohydrate degradation; glycolysis; pyruvate from D-glyceraldehyde 3-phosphate: step 1/5. Its function is as follows. Catalyzes the oxidative phosphorylation of glyceraldehyde 3-phosphate (G3P) to 1,3-bisphosphoglycerate (BPG) using the cofactor NAD. The first reaction step involves the formation of a hemiacetal intermediate between G3P and a cysteine residue, and this hemiacetal intermediate is then oxidized to a thioester, with concomitant reduction of NAD to NADH. The reduced NADH is then exchanged with the second NAD, and the thioester is attacked by a nucleophilic inorganic phosphate to produce BPG. In Thermus aquaticus, this protein is Glyceraldehyde-3-phosphate dehydrogenase (gap).